A 213-amino-acid chain; its full sequence is Negative modulator of initiation of replication (213 aa).

Interaction with DNA regions lie at residues 116–117, 145–149, and 179–185; these read AV, RTRVY, and NTNSGRK.

Belongs to the SeqA family. As to quaternary structure, homodimer. Polymerizes to form helical filaments.

Its subcellular location is the cytoplasm. Functionally, negative regulator of replication initiation, which contributes to regulation of DNA replication and ensures that replication initiation occurs exactly once per chromosome per cell cycle. Binds to pairs of hemimethylated GATC sequences in the oriC region, thus preventing assembly of replication proteins and re-initiation at newly replicated origins. Repression is relieved when the region becomes fully methylated. The polypeptide is Negative modulator of initiation of replication (Haemophilus parainfluenzae (strain T3T1)).